The primary structure comprises 208 residues: Uracil phosphoribosyltransferase (208 aa).

Residues Arg78, Arg103, and 130–138 contribute to the 5-phospho-alpha-D-ribose 1-diphosphate site; that span reads DPMLATGGS. Residues Ile193 and 198-200 contribute to the uracil site; that span reads GDA. Asp199 is a binding site for 5-phospho-alpha-D-ribose 1-diphosphate.

The protein belongs to the UPRTase family. It depends on Mg(2+) as a cofactor.

It catalyses the reaction UMP + diphosphate = 5-phospho-alpha-D-ribose 1-diphosphate + uracil. It participates in pyrimidine metabolism; UMP biosynthesis via salvage pathway; UMP from uracil: step 1/1. With respect to regulation, allosterically activated by GTP. In terms of biological role, catalyzes the conversion of uracil and 5-phospho-alpha-D-ribose 1-diphosphate (PRPP) to UMP and diphosphate. This chain is Uracil phosphoribosyltransferase, found in Yersinia enterocolitica serotype O:8 / biotype 1B (strain NCTC 13174 / 8081).